The following is a 26-amino-acid chain: Unknown protein 16 (26 aa).

A disordered region spans residues 1–26; that stretch reads AINSESGVRSVVPQPCNALPNQGPEK.

The polypeptide is Unknown protein 16 (Pseudotsuga menziesii (Douglas-fir)).